Reading from the N-terminus, the 262-residue chain is Putative BTB/POZ domain-containing protein L834 (262 aa).

The 71-residue stretch at 16-86 folds into the BTB domain; sequence FDVVVELTDE…FYKKNIQPCI (71 aa).

It belongs to the mimivirus BTB/WD family.

This chain is Putative BTB/POZ domain-containing protein L834, found in Acanthamoeba polyphaga (Amoeba).